A 522-amino-acid polypeptide reads, in one-letter code: Lysine--tRNA ligase (522 aa).

The 'HIGH' region motif lies at 44 to 52 (PSGLPHIGT). The short motif at 290-294 (KISKS) is the 'KMSKS' region element. Residue K293 participates in ATP binding.

Belongs to the class-I aminoacyl-tRNA synthetase family.

The protein localises to the cytoplasm. The enzyme catalyses tRNA(Lys) + L-lysine + ATP = L-lysyl-tRNA(Lys) + AMP + diphosphate. In Rickettsia conorii (strain ATCC VR-613 / Malish 7), this protein is Lysine--tRNA ligase.